Reading from the N-terminus, the 585-residue chain is Pyruvate kinase (585 aa).

Arg-32 contacts substrate. Residues Asn-34, Ser-36, Asp-66, and Thr-67 each contribute to the K(+) site. Position 34–37 (34–37 (NFSH)) interacts with ATP. ATP-binding residues include Arg-73 and Lys-156. Glu-222 contributes to the Mg(2+) binding site. Substrate-binding residues include Gly-245, Asp-246, and Thr-278. Asp-246 is a binding site for Mg(2+).

It belongs to the pyruvate kinase family. The protein in the C-terminal section; belongs to the PEP-utilizing enzyme family. Homotetramer. The cofactor is Mg(2+). It depends on K(+) as a cofactor.

The enzyme catalyses pyruvate + ATP = phosphoenolpyruvate + ADP + H(+). It participates in carbohydrate degradation; glycolysis; pyruvate from D-glyceraldehyde 3-phosphate: step 5/5. This chain is Pyruvate kinase (pyk), found in Bacillus licheniformis.